Reading from the N-terminus, the 83-residue chain is SPbeta prophage-derived uncharacterized protein YopE (83 aa).

The next 2 helical transmembrane spans lie at 5–25 and 60–80; these read AYFL…FIFV and VIAF…TKLF.

The protein localises to the cell membrane. The protein is SPbeta prophage-derived uncharacterized protein YopE (yopE) of Bacillus subtilis (strain 168).